The primary structure comprises 586 residues: Transcription elongation regulator 1-like protein (586 aa).

Residues 1–30 (MQAGARFQRRRRQLQQQQPRRRQPLLWPMD) are disordered. Residues 7 to 23 (FQRRRRQLQQQQPRRRQ) show a composition bias toward basic residues. A WW 1 domain is found at 148 to 181 (TPIGKSWIDKRIPNCKIFFNNSFALDSTWIHPEE). Disordered regions lie at residues 281-344 (TSPV…PGSP) and 378-448 (DLNR…QILL). The span at 306–317 (KSRDGDKEDKEP) shows a compositional bias: basic and acidic residues. Residues 339 to 372 (PVPGSPWCVVWTGDDRVFFFNPTMHLSVWEKPMD) form the WW 2 domain. Basic and acidic residues-rich tracts occupy residues 378 to 387 (DLNRIIEDPP), 411 to 421 (DQDVKTKRNRT), and 428 to 439 (KPEEAKREDKGT). FF domains are found at residues 450 to 503 (LEER…FVKT) and 515 to 570 (KLLL…FILI).

This Homo sapiens (Human) protein is Transcription elongation regulator 1-like protein (TCERG1L).